A 310-amino-acid chain; its full sequence is Transcriptional activator BRRF1 (310 aa).

The protein belongs to the lymphocryptovirus BBRF1 family.

In terms of biological role, enhances the ability of BRLF1 to induce lytic infection by cooperating with it to transcriptionally activate the BZLF1 promoter. The sequence is that of Transcriptional activator BRRF1 from Epstein-Barr virus (strain AG876) (HHV-4).